Consider the following 308-residue polypeptide: Elongation factor Ts (308 aa).

The segment at 80 to 83 (TDFV) is involved in Mg(2+) ion dislocation from EF-Tu.

Belongs to the EF-Ts family.

It localises to the cytoplasm. Associates with the EF-Tu.GDP complex and induces the exchange of GDP to GTP. It remains bound to the aminoacyl-tRNA.EF-Tu.GTP complex up to the GTP hydrolysis stage on the ribosome. The protein is Elongation factor Ts of Sphingopyxis alaskensis (strain DSM 13593 / LMG 18877 / RB2256) (Sphingomonas alaskensis).